A 370-amino-acid chain; its full sequence is DnaJ homolog subfamily B member 12 (370 aa).

M1 is subject to N-acetylmethionine. A disordered region spans residues 51 to 92 (NQKPQPAGDQPQPTEATHTTHRKAAGANTASANGEAGGESTK). Residues 110 to 174 (DYYEILGVSR…EKRKQYDQFG (65 aa)) form the J domain. Position 185 is a pros-methylhistidine (H185). A helical membrane pass occupies residues 242–262 (GGLGVFVQLMPILILILVSAL).

Belongs to the DnaJ family. DNAJB12/DNAJB14 subfamily. Homodimer and homotetramer. Interacts (via J domain) with HSPA8/Hsc70. Forms a multiprotein complex, at least composed of DNAJB12, DNAJB14, HSPA8/Hsc70 and SGTA; interaction with DNAJB14 and HSPA8/Hsc70 is direct. Methylated at His-185 by METTL9.

It is found in the endoplasmic reticulum membrane. The protein resides in the nucleus membrane. Its function is as follows. Acts as a co-chaperone with HSPA8/Hsc70; required to promote protein folding and trafficking, prevent aggregation of client proteins, and promote unfolded proteins to endoplasmic reticulum-associated degradation (ERAD) pathway. Acts by determining HSPA8/Hsc70's ATPase and polypeptide-binding activities. Can also act independently of HSPA8/Hsc70: together with DNAJB14, acts as a chaperone that promotes maturation of potassium channels KCND2 and KCNH2 by stabilizing nascent channel subunits and assembling them into tetramers. While stabilization of nascent channel proteins is dependent on HSPA8/Hsc70, the process of oligomerization of channel subunits is independent of HSPA8/Hsc70. When overexpressed, forms membranous structures together with DNAJB14 and HSPA8/Hsc70 within the nucleus; the role of these structures, named DJANGOs, is still unclear. The polypeptide is DnaJ homolog subfamily B member 12 (DNAJB12) (Bos taurus (Bovine)).